The chain runs to 306 residues: Dermonecrotic toxin LiSicTox-alphaIA1a (306 aa).

An N-terminal signal peptide occupies residues 1–18 (MLPYIVLVLGCWSVLSQA). The propeptide occupies 19-26 (AQTDDEER). His-38 is a catalytic residue. Mg(2+) is bound by residues Glu-58 and Asp-60. His-74 serves as the catalytic Nucleophile. 2 disulfides stabilise this stretch: Cys-78/Cys-84 and Cys-80/Cys-223. Position 118 (Asp-118) interacts with Mg(2+).

This sequence belongs to the arthropod phospholipase D family. Class II subfamily. Class IIa sub-subfamily. Mg(2+) serves as cofactor. As to expression, expressed by the venom gland.

Its subcellular location is the secreted. The catalysed reaction is an N-(acyl)-sphingosylphosphocholine = an N-(acyl)-sphingosyl-1,3-cyclic phosphate + choline. It carries out the reaction an N-(acyl)-sphingosylphosphoethanolamine = an N-(acyl)-sphingosyl-1,3-cyclic phosphate + ethanolamine. The enzyme catalyses a 1-acyl-sn-glycero-3-phosphocholine = a 1-acyl-sn-glycero-2,3-cyclic phosphate + choline. It catalyses the reaction a 1-acyl-sn-glycero-3-phosphoethanolamine = a 1-acyl-sn-glycero-2,3-cyclic phosphate + ethanolamine. The catalysed reaction is 1-hexadecanoyl-sn-glycero-3-phosphocholine = 1-hexadecanoyl-sn-glycero-2,3-cyclic phosphate + choline. With respect to regulation, catalytic activity and hemolysis are inhibited by divalent ion chelators (1,10-phenanthroline, EDTA, and EGTA). In terms of biological role, dermonecrotic toxins cleave the phosphodiester linkage between the phosphate and headgroup of certain phospholipids (sphingolipid and lysolipid substrates), forming an alcohol (often choline) and a cyclic phosphate. This toxin acts on sphingomyelin (SM) with high activity. It discriminate between the number of carbon atoms in the substrates, since it prefers SM with six carbons in the fatty acid chain (SM6:0) to other SMs (SM12:0 &gt; SM16:0 &gt; SM18:0 &gt; SM2:0 &gt; SM24:0). It also acts on lysophosphatidylcholine (LPC) (LPC16:0 = LPC12:0 &gt; LPC18:0), and lyso-platelet activating factor (LPAF, an alkyl-LPC) but not on phosphatidylcholine (PC). It may also act on ceramide phosphoethanolamine (CPE), lysophosphatidylcholine (LPC) and lysophosphatidylethanolamine (LPE), but not on lysophosphatidylserine (LPS), and lysophosphatidylglycerol (LPG). It acts by transphosphatidylation, releasing exclusively cyclic phosphate products as second products. In vivo, it induces dermonecrosis, vascular permeability, platelet aggregation, inflammatory response, edema and cytotoxicity against renal epithelial cells. It causes direct nephrotoxicity and is directly toxic to liver. It also induces hemolysis in a complement-dependent manner as well as in a complement-independent manner. The hemolysis provoked in a complement-independent manner is composed of several steps. The toxin binds to erythrocyte membranes, hydrolyzes membrane phospholipids (SM and LPC) thus generating metabolism products that cause hemolysis, probably by provoking an increase of calcium inside cells. The calcium influx is due to the opening of L-type calcium channels, since L-type calcium channel blockers inhibit calcium influx. Is lethal to mice when intraperitoneally injected. The polypeptide is Dermonecrotic toxin LiSicTox-alphaIA1a (Loxosceles intermedia (Brown spider)).